Consider the following 191-residue polypeptide: Thymidine kinase (191 aa).

ATP is bound by residues 15–22 (GPMYSGKT) and 88–91 (DEAQ). Catalysis depends on glutamate 89, which acts as the Proton acceptor. Residues cysteine 145, cysteine 148, cysteine 183, and cysteine 186 each coordinate Zn(2+).

Belongs to the thymidine kinase family. Homotetramer.

It is found in the cytoplasm. It carries out the reaction thymidine + ATP = dTMP + ADP + H(+). The sequence is that of Thymidine kinase from Clostridium botulinum (strain Hall / ATCC 3502 / NCTC 13319 / Type A).